A 107-amino-acid chain; its full sequence is Ribonuclease P protein component 4 (107 aa).

Zn(2+)-binding residues include Cys-66, Cys-69, Cys-92, and Cys-95.

Belongs to the eukaryotic/archaeal RNase P protein component 4 family. Consists of a catalytic RNA component and at least 4-5 protein subunits. Zn(2+) serves as cofactor.

The protein localises to the cytoplasm. It catalyses the reaction Endonucleolytic cleavage of RNA, removing 5'-extranucleotides from tRNA precursor.. Its function is as follows. Part of ribonuclease P, a protein complex that generates mature tRNA molecules by cleaving their 5'-ends. This chain is Ribonuclease P protein component 4, found in Methanosarcina mazei (strain ATCC BAA-159 / DSM 3647 / Goe1 / Go1 / JCM 11833 / OCM 88) (Methanosarcina frisia).